A 568-amino-acid polypeptide reads, in one-letter code: Zinc finger protein 768 (568 aa).

Basic and acidic residues predominate over residues 1-16 (MEREASSWGLESRDVH). Disordered stretches follow at residues 1–223 (MERE…SLGV), 228–247 (SFTQ…FDMP), and 264–287 (LNLT…QGPR). Phosphoserine occurs at positions 17, 23, and 27. Threonine 35 carries the phosphothreonine modification. A phosphoserine mark is found at serine 36, serine 65, serine 72, serine 79, serine 86, serine 93, serine 100, serine 107, serine 114, serine 121, serine 128, serine 135, and serine 149. Positions 62 to 80 (EPQSPEFEPQSPEFESQSP) are enriched in low complexity. The segment covering 110-122 (SDPQSPEFESQSP) has biased composition (polar residues). Tyrosine 152 carries the post-translational modification Phosphotyrosine. Phosphoserine is present on serine 154. Over residues 159–186 (FESQSPGYESQSPGYEPQNSGDGVQNSE) the composition is skewed to polar residues. Phosphothreonine is present on threonine 189. Residue serine 191 is modified to Phosphoserine. The C2H2-type 1 zinc finger occupies 289–311 (NICGICGKSFGRGSTLIQHQRIH). Threonine 312 is modified (phosphothreonine). Tyrosine 317 carries the post-translational modification Phosphotyrosine. C2H2-type zinc fingers lie at residues 317–339 (YKCE…QRTH), 345–367 (YKCP…QRTH), 373–395 (YKCP…QRTH), and 401–423 (YSCP…QRVH). A phosphoserine mark is found at serine 323 and serine 327. Position 424 is a phosphothreonine (threonine 424). C2H2-type zinc fingers lie at residues 429–451 (FSCG…ARSH), 457–479 (FKCP…ARTH), 485–507 (YSCP…QRSH), 513–535 (YRCA…HRVH), and 541–563 (YKCD…QRTH). The residue at position 470 (serine 470) is a Phosphoserine.

It belongs to the krueppel C2H2-type zinc-finger protein family. Interacts (via zinc-finger domains) with TP53 (via N-terminus); interaction might be facilitated by TP53 oligomerization state. Interacts with ELP3. Post-translationally, may be phosphorylated at residue 'Ser-5' of the tandem heptapeptide repeats in the N-terminus. Phosphorylation might be increased upon RAS pathway activation and negatively regulate protein stability.

It is found in the nucleus. The protein resides in the chromosome. Binds to mammalian-wide interspersed repeat (MIRs) sequences in euchromatin and promoter regions of genes at the consensus sequence 5'-GCTGTGTG-[N20]-CCTCTCTG-3', consisting of two anchor regions connected by a linker region; the linker region probably does not contribute to the binding specificity. Required for cell homeostasis. May be involved in transcriptional regulation. This Mus musculus (Mouse) protein is Zinc finger protein 768 (Znf768).